Reading from the N-terminus, the 521-residue chain is Tetratricopeptide repeat and J domain-containing co-chaperone DNJ1 (521 aa).

The first 21 residues, 1–21, serve as a signal peptide directing secretion; sequence MHLNLAGLAVAATAFLATASA. 7 TPR repeats span residues 33–66, 67–100, 102–134, 176–209, 211–244, 315–348, and 349–382; these read VSNLLTKAQTHLSRGETNEALVYYDAAIARDPTN, YLSLFKRATAYLSLGRTSQATEDFNKVLSLKPGF, GAHLQLARLRAKAGDWDAAKAQYGLAGKAPKSA, PHLRELRAHCRFELGDVELALSDLQHVLHMKPGD, SPHIVISATSFYALGDLENGIGQVKKCLQSDPDS, LENLIEMTCQAYTESSHKEAAKYCDESLQLNPDS, and FWGLLHKGKAQLKSELYDAAIATLEKAAEIRPDQ. The 70-residue stretch at 404 to 473 folds into the J domain; that stretch reads DYYKVLGVEN…ELRARFDRGD (70 aa). Basic and acidic residues predominate over residues 464–474; that stretch reads ELRARFDRGDD. The disordered stretch occupies residues 464 to 521; it reads ELRARFDRGDDPNSQERPNPFQGQGNPFGGGHPFMFQQGGGGGGPNIKFQFGGQPFGF. Gly residues predominate over residues 489-508; sequence NPFGGGHPFMFQQGGGGGGP. A compositionally biased stretch (low complexity) spans 509–521; sequence NIKFQFGGQPFGF.

The protein resides in the endoplasmic reticulum lumen. Functionally, endoplasmic reticulum co-chaperone required for the of virulence factors such as PG1, the major endopolygalacturonase produced during the infection of tomato plants. The chain is Tetratricopeptide repeat and J domain-containing co-chaperone DNJ1 from Fusarium oxysporum f. sp. lycopersici (strain 4287 / CBS 123668 / FGSC 9935 / NRRL 34936) (Fusarium vascular wilt of tomato).